The chain runs to 70 residues: Mu-conotoxin PnIVB (70 aa).

The N-terminal stretch at 1–20 is a signal peptide; the sequence is MMSKLGVLLIICLLLCPLTA. Positions 21–51 are excised as a propeptide; the sequence is VPQDGDQPADQPAERMQDDISSEHHPFFDPV.

Post-translationally, contains 3 disulfide bonds. They are not added, since framework IV presents two different connectivities (I-V, II-III, IV-VI and I-III, II-V, IV-VI). As to expression, expressed by the venom duct.

The protein localises to the secreted. Mu-conotoxins block voltage-gated sodium channels (Nav). Blocks reversibly sodium channels in molluskan neurons, but has no effect on sodium currents in bovine chromaffin cells or in rat brain synaptosomes. Induces paralysis in bivalve mollusks (Mytilus). No effect are observed on fish (Gambusia) and fly larvae (Sarcophaga). Is approximately 6 times more potent than PnIVA in blockade of the sodium current in Lymnaea neurons. The sequence is that of Mu-conotoxin PnIVB from Conus pennaceus (Feathered cone).